We begin with the raw amino-acid sequence, 787 residues long: Pleckstrin homology domain-containing family G member 6 (787 aa).

Positions 161–353 (HQQEALWELL…ESFLRHINGQ (193 aa)) constitute a DH domain. The 101-residue stretch at 409–509 (QLLLEGPVRV…WLEKTQHAQT (101 aa)) folds into the PH domain. The tract at residues 533–762 (QGTESPSTRP…EPGNGKPRRL (230 aa)) is disordered. Residues 535-557 (TESPSTRPSTPSPSPEDSQSSAE) are compositionally biased toward low complexity. The segment covering 724–742 (LRPRSLREDMLREIREELA) has biased composition (basic and acidic residues).

In terms of assembly, interacts with MYH10. Interacts with ELMO1 and EZR (in an open conformation). Interacts with CSPP1.

The protein localises to the cell projection. It is found in the microvillus. It localises to the cytoplasm. Its subcellular location is the cytoskeleton. The protein resides in the spindle. The protein localises to the cleavage furrow. Guanine nucleotide exchange factor activating the small GTPase RHOA, which, in turn, induces myosin filament formation. Also activates RHOG. Does not activate RAC1, or to a much lower extent than RHOA and RHOG. Part of a functional unit, involving PLEKHG6, MYH10 and RHOA, at the cleavage furrow to advance furrow ingression during cytokinesis. In epithelial cells, required for the formation of microvilli and membrane ruffles on the apical pole. Along with EZR, required for normal macropinocytosis. The chain is Pleckstrin homology domain-containing family G member 6 (Plekhg6) from Mus musculus (Mouse).